The chain runs to 84 residues: UPF0291 protein EUBELI_00985 (84 aa).

Belongs to the UPF0291 family.

It is found in the cytoplasm. The sequence is that of UPF0291 protein EUBELI_00985 from Lachnospira eligens (strain ATCC 27750 / DSM 3376 / VPI C15-48 / C15-B4) (Eubacterium eligens).